The chain runs to 144 residues: AP-4 complex subunit sigma-1 (144 aa).

Belongs to the adaptor complexes small subunit family. In terms of assembly, adaptor protein complex 4 (AP-4) is a heterotetramer composed of two large adaptins (epsilon-type subunit AP4E1 and beta-type subunit AP4B1), a medium adaptin (mu-type subunit AP4M1) and a small adaptin (sigma-type AP4S1). Widely expressed.

It localises to the golgi apparatus. The protein localises to the trans-Golgi network membrane. Its function is as follows. Component of the adaptor protein complex 4 (AP-4). Adaptor protein complexes are vesicle coat components involved both in vesicle formation and cargo selection. They control the vesicular transport of proteins in different trafficking pathways. AP-4 forms a non clathrin-associated coat on vesicles departing the trans-Golgi network (TGN) and may be involved in the targeting of proteins from the trans-Golgi network (TGN) to the endosomal-lysosomal system. It is also involved in protein sorting to the basolateral membrane in epithelial cells and the proper asymmetric localization of somatodendritic proteins in neurons. AP-4 is involved in the recognition and binding of tyrosine-based sorting signals found in the cytoplasmic part of cargos, but may also recognize other types of sorting signal. In Homo sapiens (Human), this protein is AP-4 complex subunit sigma-1.